Reading from the N-terminus, the 76-residue chain is ATP synthase subunit c (76 aa).

A run of 2 helical transmembrane segments spans residues 7-27 and 50-70; these read VATA…IGII and FIGI…AFLI.

This sequence belongs to the ATPase C chain family. F-type ATPases have 2 components, F(1) - the catalytic core - and F(0) - the membrane proton channel. F(1) has five subunits: alpha(3), beta(3), gamma(1), delta(1), epsilon(1). F(0) has four main subunits: a(1), b(1), b'(1) and c(10-14). The alpha and beta chains form an alternating ring which encloses part of the gamma chain. F(1) is attached to F(0) by a central stalk formed by the gamma and epsilon chains, while a peripheral stalk is formed by the delta, b and b' chains.

It localises to the cell membrane. In terms of biological role, f(1)F(0) ATP synthase produces ATP from ADP in the presence of a proton or sodium gradient. F-type ATPases consist of two structural domains, F(1) containing the extramembraneous catalytic core and F(0) containing the membrane proton channel, linked together by a central stalk and a peripheral stalk. During catalysis, ATP synthesis in the catalytic domain of F(1) is coupled via a rotary mechanism of the central stalk subunits to proton translocation. Key component of the F(0) channel; it plays a direct role in translocation across the membrane. A homomeric c-ring of between 10-14 subunits forms the central stalk rotor element with the F(1) delta and epsilon subunits. The sequence is that of ATP synthase subunit c from Chloroflexus aurantiacus (strain ATCC 29366 / DSM 635 / J-10-fl).